A 511-amino-acid polypeptide reads, in one-letter code: Cytochrome P450 26B1 (511 aa).

Residue Cys-440 coordinates heme.

It belongs to the cytochrome P450 family. Requires heme as cofactor.

Its subcellular location is the endoplasmic reticulum membrane. The protein resides in the microsome membrane. It carries out the reaction all-trans-retinoate + reduced [NADPH--hemoprotein reductase] + O2 = all-trans-4-hydroxyretinoate + oxidized [NADPH--hemoprotein reductase] + H2O + H(+). The catalysed reaction is all-trans-retinoate + reduced [NADPH--hemoprotein reductase] + O2 = all-trans-18-hydroxyretinoate + oxidized [NADPH--hemoprotein reductase] + H2O + H(+). Its function is as follows. A cytochrome P450 monooxygenase involved in the metabolism of retinoates (RAs), the active metabolites of vitamin A, and critical signaling molecules in animals. RAs exist as at least four different isomers: all-trans-RA (atRA), 9-cis-RA, 13-cis-RA, and 9,13-dicis-RA, where atRA is considered to be the biologically active isomer, although 9-cis-RA and 13-cis-RA also have activity. Catalyzes the hydroxylation of atRA primarily at C-4 and C-18, thereby contributing to the regulation of atRA homeostasis and signaling. Hydroxylation of atRA limits its biological activity and initiates a degradative process leading to its eventual elimination. Involved in the convertion of atRA to all-trans-4-oxo-RA. Can oxidize all-trans-13,14-dihydroretinoate (DRA) to metabolites which could include all-trans-4-oxo-DRA, all-trans-4-hydroxy-DRA, all-trans-5,8-epoxy-DRA, and all-trans-18-hydroxy-DRA. Plays a role in skeletal development, both at the level of patterning and in the ossification of bone and the establishment of some synovial joints. The sequence is that of Cytochrome P450 26B1 from Danio rerio (Zebrafish).